Reading from the N-terminus, the 72-residue chain is uncharacterized protein (72 aa).

This sequence belongs to the asfivirus I73R family.

It localises to the virion. This is an uncharacterized protein from Ornithodoros (relapsing fever ticks).